Here is a 54-residue protein sequence, read N- to C-terminus: MSNGTAVMGKINNKKTHIRCRRCGHHTYNVRTKRCSHCGFPAPRIRSYRWAKAK.

Zn(2+) contacts are provided by Cys-20, Cys-23, Cys-35, and Cys-38. Residues 20–38 (CRRCGHHTYNVRTKRCSHC) form a C4-type zinc finger.

It belongs to the eukaryotic ribosomal protein eL37 family. Requires Zn(2+) as cofactor.

In terms of biological role, binds to the 23S rRNA. The sequence is that of Large ribosomal subunit protein eL37 (rpl37e) from Thermoplasma acidophilum (strain ATCC 25905 / DSM 1728 / JCM 9062 / NBRC 15155 / AMRC-C165).